Reading from the N-terminus, the 170-residue chain is Ribosome maturation factor RimM (170 aa).

The 73-residue stretch at 98–170 (PDEYYWVDLE…RIVVDWDPEF (73 aa)) folds into the PRC barrel domain.

It belongs to the RimM family. Binds ribosomal protein uS19.

The protein localises to the cytoplasm. An accessory protein needed during the final step in the assembly of 30S ribosomal subunit, possibly for assembly of the head region. Essential for efficient processing of 16S rRNA. May be needed both before and after RbfA during the maturation of 16S rRNA. It has affinity for free ribosomal 30S subunits but not for 70S ribosomes. This Xylella fastidiosa (strain 9a5c) protein is Ribosome maturation factor RimM.